A 394-amino-acid chain; its full sequence is 1-deoxy-D-xylulose 5-phosphate reductoisomerase (394 aa).

7 residues coordinate NADPH: Thr12, Gly13, Ser14, Ile15, Lys39, Gln40, and Asn126. Lys127 contacts 1-deoxy-D-xylulose 5-phosphate. Position 128 (Glu128) interacts with NADPH. Asp152 lines the Mn(2+) pocket. 1-deoxy-D-xylulose 5-phosphate is bound by residues Ser153, Glu154, Ser183, and His206. A Mn(2+)-binding site is contributed by Glu154. An NADPH-binding site is contributed by Gly212. The 1-deoxy-D-xylulose 5-phosphate site is built by Ser219, Asn224, Lys225, and Glu228. Residue Glu228 participates in Mn(2+) binding.

It belongs to the DXR family. Mg(2+) serves as cofactor. Mn(2+) is required as a cofactor.

It catalyses the reaction 2-C-methyl-D-erythritol 4-phosphate + NADP(+) = 1-deoxy-D-xylulose 5-phosphate + NADPH + H(+). It participates in isoprenoid biosynthesis; isopentenyl diphosphate biosynthesis via DXP pathway; isopentenyl diphosphate from 1-deoxy-D-xylulose 5-phosphate: step 1/6. Functionally, catalyzes the NADPH-dependent rearrangement and reduction of 1-deoxy-D-xylulose-5-phosphate (DXP) to 2-C-methyl-D-erythritol 4-phosphate (MEP). The chain is 1-deoxy-D-xylulose 5-phosphate reductoisomerase from Neisseria meningitidis serogroup B (strain ATCC BAA-335 / MC58).